The chain runs to 832 residues: FAST kinase domain-containing protein 1, mitochondrial (832 aa).

Positions 765–825 (VAIEFLDSKA…KDAWIDYLRK (61 aa)) constitute an RAP domain.

The protein belongs to the FAST kinase family.

The protein localises to the mitochondrion. Its function is as follows. May regulate the stability of some mitochondrial mRNA species. In Xenopus tropicalis (Western clawed frog), this protein is FAST kinase domain-containing protein 1, mitochondrial (fastkd1).